Here is a 440-residue protein sequence, read N- to C-terminus: Thymidine phosphorylase (440 aa).

Belongs to the thymidine/pyrimidine-nucleoside phosphorylase family. As to quaternary structure, homodimer.

It catalyses the reaction thymidine + phosphate = 2-deoxy-alpha-D-ribose 1-phosphate + thymine. Its pathway is pyrimidine metabolism; dTMP biosynthesis via salvage pathway; dTMP from thymine: step 1/2. The enzymes which catalyze the reversible phosphorolysis of pyrimidine nucleosides are involved in the degradation of these compounds and in their utilization as carbon and energy sources, or in the rescue of pyrimidine bases for nucleotide synthesis. The protein is Thymidine phosphorylase of Burkholderia pseudomallei (strain K96243).